Consider the following 301-residue polypeptide: Probable alpha-L-glutamate ligase (301 aa).

The region spanning 104-287 is the ATP-grasp domain; that stretch reads LQLLARKGVG…VAGMIINWTE (184 aa). ATP is bound by residues K141, 178-179, D187, and 211-213; these read EF and RSN. Mg(2+)-binding residues include D248, E260, and N262. D248, E260, and N262 together coordinate Mn(2+).

Belongs to the RimK family. Mg(2+) serves as cofactor. Mn(2+) is required as a cofactor.

In Marinobacter nauticus (strain ATCC 700491 / DSM 11845 / VT8) (Marinobacter aquaeolei), this protein is Probable alpha-L-glutamate ligase.